The chain runs to 356 residues: D-alanine--D-alanine ligase (356 aa).

Residues lysine 134 to asparagine 339 form the ATP-grasp domain. An ATP-binding site is contributed by glutamate 167 to glutamate 222. Mg(2+)-binding residues include aspartate 293, glutamate 306, and asparagine 308.

It belongs to the D-alanine--D-alanine ligase family. Mg(2+) is required as a cofactor. Mn(2+) serves as cofactor.

It localises to the cytoplasm. It catalyses the reaction 2 D-alanine + ATP = D-alanyl-D-alanine + ADP + phosphate + H(+). Its pathway is cell wall biogenesis; peptidoglycan biosynthesis. In terms of biological role, cell wall formation. This is D-alanine--D-alanine ligase from Macrococcus caseolyticus (strain JCSC5402) (Macrococcoides caseolyticum).